The primary structure comprises 1207 residues: DNA-directed RNA polymerase subunit beta' (1207 aa).

Residues C60, C62, C75, and C78 each contribute to the Zn(2+) site. Mg(2+) contacts are provided by D449, D451, and D453. Residues C822, C896, C903, and C906 each coordinate Zn(2+).

The protein belongs to the RNA polymerase beta' chain family. The RNAP catalytic core consists of 2 alpha, 1 beta, 1 beta' and 1 omega subunit. When a sigma factor is associated with the core the holoenzyme is formed, which can initiate transcription. The cofactor is Mg(2+). Zn(2+) is required as a cofactor.

It carries out the reaction RNA(n) + a ribonucleoside 5'-triphosphate = RNA(n+1) + diphosphate. Functionally, DNA-dependent RNA polymerase catalyzes the transcription of DNA into RNA using the four ribonucleoside triphosphates as substrates. The sequence is that of DNA-directed RNA polymerase subunit beta' from Staphylococcus saprophyticus subsp. saprophyticus (strain ATCC 15305 / DSM 20229 / NCIMB 8711 / NCTC 7292 / S-41).